We begin with the raw amino-acid sequence, 207 residues long: Ion-translocating oxidoreductase complex subunit G (207 aa).

A helical transmembrane segment spans residues 11 to 31 (GILLGFIALLCTIISAGIFFL). Position 175 is an FMN phosphoryl threonine (threonine 175).

It belongs to the RnfG family. In terms of assembly, the complex is composed of six subunits: RnfA, RnfB, RnfC, RnfD, RnfE and RnfG. It depends on FMN as a cofactor.

It localises to the cell inner membrane. Functionally, part of a membrane-bound complex that couples electron transfer with translocation of ions across the membrane. This Haemophilus influenzae (strain ATCC 51907 / DSM 11121 / KW20 / Rd) protein is Ion-translocating oxidoreductase complex subunit G.